A 189-amino-acid chain; its full sequence is Peptidyl-tRNA hydrolase (189 aa).

A tRNA-binding site is contributed by Tyr-15. Catalysis depends on His-20, which acts as the Proton acceptor. Positions 67, 69, and 115 each coordinate tRNA.

The protein belongs to the PTH family. As to quaternary structure, monomer.

The protein localises to the cytoplasm. It catalyses the reaction an N-acyl-L-alpha-aminoacyl-tRNA + H2O = an N-acyl-L-amino acid + a tRNA + H(+). In terms of biological role, hydrolyzes ribosome-free peptidyl-tRNAs (with 1 or more amino acids incorporated), which drop off the ribosome during protein synthesis, or as a result of ribosome stalling. Functionally, catalyzes the release of premature peptidyl moieties from peptidyl-tRNA molecules trapped in stalled 50S ribosomal subunits, and thus maintains levels of free tRNAs and 50S ribosomes. This chain is Peptidyl-tRNA hydrolase, found in Symbiobacterium thermophilum (strain DSM 24528 / JCM 14929 / IAM 14863 / T).